Reading from the N-terminus, the 365-residue chain is UPF0283 membrane protein Avi_2471 (365 aa).

Over residues 1–10 (MSKAPEDQRP) the composition is skewed to basic and acidic residues. The disordered stretch occupies residues 1–47 (MSKAPEDQRPMPRRPAAFSLEEPSSSPARPPFAEAQEPQRRAPKSFD). A run of 2 helical transmembrane segments spans residues 83–103 (FGKL…GLWI) and 117–137 (LGYT…VVVI).

The protein belongs to the UPF0283 family.

The protein localises to the cell inner membrane. This Allorhizobium ampelinum (strain ATCC BAA-846 / DSM 112012 / S4) (Agrobacterium vitis (strain S4)) protein is UPF0283 membrane protein Avi_2471.